The following is a 434-amino-acid chain: Tol-Pal system protein TolB (434 aa).

An N-terminal signal peptide occupies residues 1-28; sequence MMNTRVWCKIIGMLALLVWLVSSPSVFA.

It belongs to the TolB family. In terms of assembly, the Tol-Pal system is composed of five core proteins: the inner membrane proteins TolA, TolQ and TolR, the periplasmic protein TolB and the outer membrane protein Pal. They form a network linking the inner and outer membranes and the peptidoglycan layer.

It localises to the periplasm. Functionally, part of the Tol-Pal system, which plays a role in outer membrane invagination during cell division and is important for maintaining outer membrane integrity. The sequence is that of Tol-Pal system protein TolB from Nitrosococcus oceani (strain ATCC 19707 / BCRC 17464 / JCM 30415 / NCIMB 11848 / C-107).